Here is a 468-residue protein sequence, read N- to C-terminus: Glutamate--tRNA ligase 2 (468 aa).

Residues 9–19 (PSPTGHLHIGG) carry the 'HIGH' region motif. Cys98, Cys100, Cys125, and His127 together coordinate Zn(2+). The short motif at 236 to 240 (RLSKR) is the 'KMSKS' region element. Lys239 is an ATP binding site.

It belongs to the class-I aminoacyl-tRNA synthetase family. Glutamate--tRNA ligase type 1 subfamily. In terms of assembly, monomer. The cofactor is Zn(2+).

Its subcellular location is the cytoplasm. The catalysed reaction is tRNA(Glu) + L-glutamate + ATP = L-glutamyl-tRNA(Glu) + AMP + diphosphate. Its function is as follows. Catalyzes the attachment of glutamate to tRNA(Glu) in a two-step reaction: glutamate is first activated by ATP to form Glu-AMP and then transferred to the acceptor end of tRNA(Glu). The chain is Glutamate--tRNA ligase 2 from Methylococcus capsulatus (strain ATCC 33009 / NCIMB 11132 / Bath).